The primary structure comprises 351 residues: Phosphoribosylformylglycinamidine cyclo-ligase (351 aa).

It belongs to the AIR synthase family.

Its subcellular location is the cytoplasm. The catalysed reaction is 2-formamido-N(1)-(5-O-phospho-beta-D-ribosyl)acetamidine + ATP = 5-amino-1-(5-phospho-beta-D-ribosyl)imidazole + ADP + phosphate + H(+). It functions in the pathway purine metabolism; IMP biosynthesis via de novo pathway; 5-amino-1-(5-phospho-D-ribosyl)imidazole from N(2)-formyl-N(1)-(5-phospho-D-ribosyl)glycinamide: step 2/2. The sequence is that of Phosphoribosylformylglycinamidine cyclo-ligase from Burkholderia ambifaria (strain ATCC BAA-244 / DSM 16087 / CCUG 44356 / LMG 19182 / AMMD) (Burkholderia cepacia (strain AMMD)).